The primary structure comprises 115 residues: Ribosome-binding factor A (115 aa).

This sequence belongs to the RbfA family. As to quaternary structure, monomer. Binds 30S ribosomal subunits, but not 50S ribosomal subunits or 70S ribosomes.

The protein localises to the cytoplasm. Its function is as follows. One of several proteins that assist in the late maturation steps of the functional core of the 30S ribosomal subunit. Associates with free 30S ribosomal subunits (but not with 30S subunits that are part of 70S ribosomes or polysomes). Required for efficient processing of 16S rRNA. May interact with the 5'-terminal helix region of 16S rRNA. The polypeptide is Ribosome-binding factor A (Bacillus velezensis (strain DSM 23117 / BGSC 10A6 / LMG 26770 / FZB42) (Bacillus amyloliquefaciens subsp. plantarum)).